Here is a 177-residue protein sequence, read N- to C-terminus: Large ribosomal subunit protein uL6 (177 aa).

This sequence belongs to the universal ribosomal protein uL6 family. In terms of assembly, part of the 50S ribosomal subunit.

Functionally, this protein binds to the 23S rRNA, and is important in its secondary structure. It is located near the subunit interface in the base of the L7/L12 stalk, and near the tRNA binding site of the peptidyltransferase center. This is Large ribosomal subunit protein uL6 from Bordetella petrii (strain ATCC BAA-461 / DSM 12804 / CCUG 43448).